Reading from the N-terminus, the 99-residue chain is Protein RnfH (99 aa).

It belongs to the UPF0125 (RnfH) family.

The sequence is that of Protein RnfH from Buchnera aphidicola subsp. Acyrthosiphon pisum (strain 5A).